A 226-amino-acid chain; its full sequence is Ribose-5-phosphate isomerase A (226 aa).

Substrate contacts are provided by residues 28–31 (TGST), 84–87 (DGAD), and 97–100 (KGLG). Residue Glu-106 is the Proton acceptor of the active site. Lys-124 contributes to the substrate binding site.

It belongs to the ribose 5-phosphate isomerase family. Homodimer.

It carries out the reaction aldehydo-D-ribose 5-phosphate = D-ribulose 5-phosphate. It functions in the pathway carbohydrate degradation; pentose phosphate pathway; D-ribose 5-phosphate from D-ribulose 5-phosphate (non-oxidative stage): step 1/1. Functionally, catalyzes the reversible conversion of ribose-5-phosphate to ribulose 5-phosphate. The protein is Ribose-5-phosphate isomerase A of Deinococcus radiodurans (strain ATCC 13939 / DSM 20539 / JCM 16871 / CCUG 27074 / LMG 4051 / NBRC 15346 / NCIMB 9279 / VKM B-1422 / R1).